Here is a 215-residue protein sequence, read N- to C-terminus: Large ribosomal subunit protein uL3 (215 aa).

Positions 136–155 (GVSISHRSHGSTGQRQDPGK) are disordered. Glutamine 151 is subject to N5-methylglutamine.

It belongs to the universal ribosomal protein uL3 family. As to quaternary structure, part of the 50S ribosomal subunit. Forms a cluster with proteins L14 and L19. Post-translationally, methylated by PrmB.

One of the primary rRNA binding proteins, it binds directly near the 3'-end of the 23S rRNA, where it nucleates assembly of the 50S subunit. The sequence is that of Large ribosomal subunit protein uL3 from Rickettsia africae (strain ESF-5).